Here is a 278-residue protein sequence, read N- to C-terminus: Phosphatidylglycerol--prolipoprotein diacylglyceryl transferase (278 aa).

Transmembrane regions (helical) follow at residues 19-39 (WYGI…INEG), 49-69 (FIDF…IYYV), 83-103 (IIAI…GLIV), and 112-132 (MLPP…AQVI). Arg-134 provides a ligand contact to a 1,2-diacyl-sn-glycero-3-phospho-(1'-sn-glycerol). The next 3 membrane-spanning stretches (helical) occupy residues 174-194 (QPTY…ILSL), 204-224 (GEVF…VEGM), and 235-255 (IRVS…LWVY).

The protein belongs to the Lgt family.

Its subcellular location is the cell membrane. The enzyme catalyses L-cysteinyl-[prolipoprotein] + a 1,2-diacyl-sn-glycero-3-phospho-(1'-sn-glycerol) = an S-1,2-diacyl-sn-glyceryl-L-cysteinyl-[prolipoprotein] + sn-glycerol 1-phosphate + H(+). Its pathway is protein modification; lipoprotein biosynthesis (diacylglyceryl transfer). Its function is as follows. Catalyzes the transfer of the diacylglyceryl group from phosphatidylglycerol to the sulfhydryl group of the N-terminal cysteine of a prolipoprotein, the first step in the formation of mature lipoproteins. This is Phosphatidylglycerol--prolipoprotein diacylglyceryl transferase from Lactobacillus gasseri (strain ATCC 33323 / DSM 20243 / BCRC 14619 / CIP 102991 / JCM 1131 / KCTC 3163 / NCIMB 11718 / NCTC 13722 / AM63).